We begin with the raw amino-acid sequence, 346 residues long: MAEITAKLVKELREKSGAGVMDAKKALVETDGDMDKAVELLREKGMAKAAKKADRVAAEGLTGVYVHGNVAAVVEVNAETDFVAKNAQFVELVNATAKVIAEGKPANNDEALALVMPSGETLAEAYVNATATIGEKISFRRFALIEKTDEQHLGAYQHNGGRIGVISVVEGGDDALAKQVSMHIAAMKPTVLSYTELDAQFIKDELAQLNHAIELDNESRAMVDKPALPFLKYGSKAQLSDDVITAAEADIKAELAAEGKPEKIWDKIIPGKMDRFMLDNTKVDQAYTLLAQVYIMDDSKTVEAYLDSVNAKAIAFARFEVGEGIEKKANDFESEVAATMAAALNN.

The interval T80–V83 is involved in Mg(2+) ion dislocation from EF-Tu.

The protein belongs to the EF-Ts family.

The protein resides in the cytoplasm. Its function is as follows. Associates with the EF-Tu.GDP complex and induces the exchange of GDP to GTP. It remains bound to the aminoacyl-tRNA.EF-Tu.GTP complex up to the GTP hydrolysis stage on the ribosome. This is Elongation factor Ts from Streptococcus pyogenes serotype M18 (strain MGAS8232).